The primary structure comprises 453 residues: Dibenzothiophene-sulfone monooxygenase (453 aa).

D59, T106, H156, Y160, and S231 together coordinate FMN.

Belongs to the NtaA/SnaA/DszA monooxygenase family. Homodimer.

It is found in the cytoplasm. It catalyses the reaction dibenzothiophene 5,5-dioxide + FMNH2 + NADH + O2 = 2'-hydroxybiphenyl-2-sulfinate + FMN + NAD(+) + H2O + H(+). It participates in sulfur metabolism; dibenzothiophene degradation. Functionally, catalyzes the second step of the '4S' desulfurization pathway that removes covalently bound sulfur from dibenzothiophene (DBT) without breaking carbon-carbon bonds. Metabolizes DBT-sulfone (DBTO2 or DBT 5,5-dioxide) to 2-(2'-hydroxyphenyl)benzene sulphinate (HBPS). The chain is Dibenzothiophene-sulfone monooxygenase from Rhodococcus erythropolis (strain XP).